The primary structure comprises 418 residues: Magnesium-chelatase subunit ChlI-2, chloroplastic (418 aa).

The N-terminal 55 residues, 1–55 (MASLLGRSPSSILTCPRISSPSSTSSMSHLCFGPEKLSGRIQFNPKKNRSRYHVS), are a transit peptide targeting the chloroplast. Residue V56 is modified to N-acetylvaline. 2 disulfide bridges follow: C96-C187 and C348-C390. 113 to 120 (GDRGTGKS) contributes to the ATP binding site.

It belongs to the Mg-chelatase subunits D/I family. In terms of assembly, the magnesium chelatase complex is a heterotrimer consisting of subunits CHLI, CHLD and CHLH. In terms of tissue distribution, expressed in leaves.

The protein resides in the plastid. Its subcellular location is the chloroplast. The catalysed reaction is protoporphyrin IX + Mg(2+) + ATP + H2O = Mg-protoporphyrin IX + ADP + phosphate + 3 H(+). Its pathway is porphyrin-containing compound metabolism; chlorophyll biosynthesis. Its activity is regulated as follows. Redox regulation; active in reducing conditions, inactive in oxidizing conditions. Thioredoxins f and m mediate the reversible reductive activation of oxidized CHLI2. Its function is as follows. Involved in chlorophyll biosynthesis. Catalyzes the insertion of magnesium ion into protoporphyrin IX to yield Mg-protoporphyrin IX. The reaction takes place in two steps, with an ATP-dependent activation followed by an ATP-dependent chelation step. Possesses low affinity for ATP and may play a limited role in chlorophyll biosynthesis, and contributes to the assembly of the Mg-chelatase complex. The protein is Magnesium-chelatase subunit ChlI-2, chloroplastic (CHLI2) of Arabidopsis thaliana (Mouse-ear cress).